We begin with the raw amino-acid sequence, 290 residues long: Lysine export transcriptional regulatory protein LysG (290 aa).

Residues 1 to 57 form the HTH lysR-type domain; sequence MNPIQLDTLLSIIDEGSFEGASLALSISPSAVSQRVKALEHHVGRVLVSRTQPAKAT. The H-T-H motif DNA-binding region spans 18 to 37; it reads FEGASLALSISPSAVSQRVK.

The protein belongs to the LysR transcriptional regulatory family.

Functionally, positively regulates the expression of the exporter LysE. Induction requires the presence of a coinducer, which is either intracellular L-lysine, L-arginine or L-citrulline. L-histidine also acts as a coinducer of lysE expression, but this amino acid is not exported by LysE. The lysEG system prevents bacteriostasis due to elevated L-lysine or L-arginine concentrations that arise during growth in the presence of peptides or in mutants possessing a deregulated biosynthesis pathway. The chain is Lysine export transcriptional regulatory protein LysG from Corynebacterium glutamicum (strain ATCC 13032 / DSM 20300 / JCM 1318 / BCRC 11384 / CCUG 27702 / LMG 3730 / NBRC 12168 / NCIMB 10025 / NRRL B-2784 / 534).